A 169-amino-acid chain; its full sequence is Ribosome maturation factor RimM (169 aa).

The PRC barrel domain occupies 91 to 167 (EGEYYFADLI…RIVIATDFAH (77 aa)).

It belongs to the RimM family. In terms of assembly, binds ribosomal protein uS19.

Its subcellular location is the cytoplasm. An accessory protein needed during the final step in the assembly of 30S ribosomal subunit, possibly for assembly of the head region. Essential for efficient processing of 16S rRNA. May be needed both before and after RbfA during the maturation of 16S rRNA. It has affinity for free ribosomal 30S subunits but not for 70S ribosomes. The protein is Ribosome maturation factor RimM of Erythrobacter litoralis (strain HTCC2594).